The chain runs to 289 residues: 4-diphosphocytidyl-2-C-methyl-D-erythritol kinase (289 aa).

Lysine 11 is a catalytic residue. 93 to 103 is a binding site for ATP; it reads PLAAGLAGGSA. The active site involves aspartate 135.

Belongs to the GHMP kinase family. IspE subfamily.

It catalyses the reaction 4-CDP-2-C-methyl-D-erythritol + ATP = 4-CDP-2-C-methyl-D-erythritol 2-phosphate + ADP + H(+). The protein operates within isoprenoid biosynthesis; isopentenyl diphosphate biosynthesis via DXP pathway; isopentenyl diphosphate from 1-deoxy-D-xylulose 5-phosphate: step 3/6. Functionally, catalyzes the phosphorylation of the position 2 hydroxy group of 4-diphosphocytidyl-2C-methyl-D-erythritol. The polypeptide is 4-diphosphocytidyl-2-C-methyl-D-erythritol kinase (Thermoanaerobacter sp. (strain X514)).